A 126-amino-acid polypeptide reads, in one-letter code: Sperm-specific H1/protamine-like protein type 2 (126 aa).

In terms of domain architecture, H15 spans 5-84; the sequence is KKPTTLSMIV…GATGSFRVGK (80 aa). Residues 74 to 126 form a disordered region; that stretch reads SGATGSFRVGKAPASPKKAKKAKSPKKKSSKKSKNKSNNAKAKKSPKKKADSN. Over residues 90–120 the composition is skewed to basic residues; that stretch reads KKAKKAKSPKKKSSKKSKNKSNNAKAKKSPK.

OE2 and OE3 are produced by post-translational cleavage of a common precursor. Sperm.

Its subcellular location is the nucleus. It localises to the chromosome. Linker histones are implicated in chromatin remodeling and/or transcriptional regulation during spermiogenesis, the process of spermatid maturation into spermatozoa. Protamines substitute for histones in the chromatin of sperm during the haploid phase of spermatogenesis. They compact sperm DNA into a highly condensed, stable and inactive complex. The protein is Sperm-specific H1/protamine-like protein type 2 of Ostrea edulis (Native oyster).